The primary structure comprises 206 residues: Protein GrpE (206 aa).

It belongs to the GrpE family. As to quaternary structure, homodimer.

It is found in the cytoplasm. In terms of biological role, participates actively in the response to hyperosmotic and heat shock by preventing the aggregation of stress-denatured proteins, in association with DnaK and GrpE. It is the nucleotide exchange factor for DnaK and may function as a thermosensor. Unfolded proteins bind initially to DnaJ; upon interaction with the DnaJ-bound protein, DnaK hydrolyzes its bound ATP, resulting in the formation of a stable complex. GrpE releases ADP from DnaK; ATP binding to DnaK triggers the release of the substrate protein, thus completing the reaction cycle. Several rounds of ATP-dependent interactions between DnaJ, DnaK and GrpE are required for fully efficient folding. The polypeptide is Protein GrpE (Psychromonas ingrahamii (strain DSM 17664 / CCUG 51855 / 37)).